We begin with the raw amino-acid sequence, 828 residues long: DNA gyrase subunit A (828 aa).

The region spanning L32 to L497 is the Topo IIA-type catalytic domain. Y120 serves as the catalytic O-(5'-phospho-DNA)-tyrosine intermediate. The GyrA-box motif lies at Q524–G530.

Belongs to the type II topoisomerase GyrA/ParC subunit family. As to quaternary structure, heterotetramer, composed of two GyrA and two GyrB chains. In the heterotetramer, GyrA contains the active site tyrosine that forms a transient covalent intermediate with DNA, while GyrB binds cofactors and catalyzes ATP hydrolysis.

The protein resides in the cytoplasm. The enzyme catalyses ATP-dependent breakage, passage and rejoining of double-stranded DNA.. In terms of biological role, a type II topoisomerase that negatively supercoils closed circular double-stranded (ds) DNA in an ATP-dependent manner to modulate DNA topology and maintain chromosomes in an underwound state. Negative supercoiling favors strand separation, and DNA replication, transcription, recombination and repair, all of which involve strand separation. Also able to catalyze the interconversion of other topological isomers of dsDNA rings, including catenanes and knotted rings. Type II topoisomerases break and join 2 DNA strands simultaneously in an ATP-dependent manner. In Streptococcus pyogenes serotype M3 (strain ATCC BAA-595 / MGAS315), this protein is DNA gyrase subunit A.